Here is a 438-residue protein sequence, read N- to C-terminus: Glycerol-3-phosphate acyltransferase 3 (438 aa).

A helical membrane pass occupies residues 14 to 34 (WLTLVGGLILLPSAFGLSLGI). S68 and S77 each carry phosphoserine. 2 helical membrane-spanning segments follow: residues 137-157 (ISPRLTMVWVLGVLVRYCFLL) and 161-181 (VTLAFIGISLLIIGTTLVGQL). The short motif at 229-234 (HTSPID) is the HXXXXD motif element.

The protein belongs to the 1-acyl-sn-glycerol-3-phosphate acyltransferase family. In terms of tissue distribution, most abundant in epididymal fat, followed by small intestine, brown adipose tissue, kidney, heart and colon.

The protein resides in the endoplasmic reticulum membrane. It catalyses the reaction sn-glycerol 3-phosphate + an acyl-CoA = a 1-acyl-sn-glycero-3-phosphate + CoA. The catalysed reaction is a 1-acyl-sn-glycero-3-phosphate + an acyl-CoA = a 1,2-diacyl-sn-glycero-3-phosphate + CoA. The enzyme catalyses dodecanoyl-CoA + sn-glycerol 3-phosphate = 1-dodecanoyl-sn-glycerol 3-phosphate + CoA. It carries out the reaction sn-glycerol 3-phosphate + hexadecanoyl-CoA = 1-hexadecanoyl-sn-glycero-3-phosphate + CoA. It catalyses the reaction sn-glycerol 3-phosphate + (9Z)-octadecenoyl-CoA = 1-(9Z-octadecenoyl)-sn-glycero-3-phosphate + CoA. The catalysed reaction is (9Z,12Z)-octadecadienoyl-CoA + sn-glycerol 3-phosphate = 1-(9Z,12Z)-octadecadienoyl-sn-glycero-3-phosphate + CoA. The enzyme catalyses 1-tetradecanoyl-sn-glycerol 3-phosphate + (9Z)-octadecenoyl-CoA = 1-tetradecanoyl-2-(9Z)-octadecenoyl-sn-glycero-3-phosphate + CoA. It carries out the reaction 1-hexadecanoyl-sn-glycero-3-phosphate + (9Z)-octadecenoyl-CoA = 1-hexadecanoyl-2-(9Z-octadecenoyl)-sn-glycero-3-phosphate + CoA. It catalyses the reaction 1-(9Z-octadecenoyl)-sn-glycero-3-phosphate + (9Z)-octadecenoyl-CoA = 1,2-di-(9Z-octadecenoyl)-sn-glycero-3-phosphate + CoA. The catalysed reaction is 1-(6Z,9Z,12Z-octadecatrienoyl)-sn-glycero-3-phosphate + (9Z)-octadecenoyl-CoA = (6Z,9Z,12Z)-octadecatrienoyl-2-(9Z)-octadecenoyl-sn-glycero-3-phosphate + CoA. The enzyme catalyses 1-(9Z,12Z,15Z)-octadecatrienoyl-sn-glycero-3-phosphate + (9Z)-octadecenoyl-CoA = 1-(9Z,12Z,15Z)-octadecatrienoyl-2-(9Z)-octadecenoyl-sn-glycero-3-phosphate + CoA. It carries out the reaction 1-(9Z-octadecenoyl)-sn-glycero-3-phosphate + tetradecanoyl-CoA = 1-(9Z)-octadecenoyl-2-tetradecanoyl-sn-glycero-3-phosphate + CoA. It catalyses the reaction 1-(9Z-octadecenoyl)-sn-glycero-3-phosphate + hexadecanoyl-CoA = 1-(9Z)-octadecenoyl-2-hexadecanoyl-sn-glycero-3-phosphate + CoA. The catalysed reaction is 1-(9Z-octadecenoyl)-sn-glycero-3-phosphate + octadecanoyl-CoA = 1-(9Z-octadecenoyl)-2-octadecanoyl-sn-glycero-3-phosphate + CoA. The enzyme catalyses 1-(9Z-octadecenoyl)-sn-glycero-3-phosphate + (9Z,12Z)-octadecadienoyl-CoA = 1-(9Z)-octadecenoyl-2-(9Z,12Z)-octadecadienoyl-sn-glycero-3-phosphate + CoA. It carries out the reaction 1-(5Z,8Z,11Z,14Z-eicosatetraenoyl)-sn-glycero-3-phosphate + (9Z)-octadecenoyl-CoA = 1-(5Z,8Z,11Z,14Z)-eicosatetraenoyl-2-(9Z)-octadecenoyl-sn-glycero-3-phosphate + CoA. Its pathway is glycerolipid metabolism; triacylglycerol biosynthesis. It participates in phospholipid metabolism; CDP-diacylglycerol biosynthesis; CDP-diacylglycerol from sn-glycerol 3-phosphate: step 1/3. Its function is as follows. Converts glycerol-3-phosphate to 1-acyl-sn-glycerol-3-phosphate (lysophosphatidic acid or LPA) by incorporating an acyl moiety at the sn-1 position of the glycerol backbone. Also converts LPA into 1,2-diacyl-sn-glycerol-3-phosphate (phosphatidic acid or PA) by incorporating an acyl moiety at the sn-2 position of the glycerol backbone. Protects cells against lipotoxicity. This is Glycerol-3-phosphate acyltransferase 3 from Mus musculus (Mouse).